The following is a 329-amino-acid chain: MQFIDQACISVKAGRGGDGIVAFRREKYVPAGGPSGGDGGKGGEIVLQADSNLQTLLDFKFKKFIVAQDGRRGGPNKCSGASGKDLVLKVPCGTQVRHQTTGIILGDLKHHGEILVVAYGGKGGLGNAHYLSNSNRAPEKCTEGKEGEQWLLHLELKLLAEVGIIGLPNAGKSTLMSVVSSARPKIADYPFTTLIPNLGVVRKPTGDGTVFADIPGLIEGAAAGVGLGHEFLRHIERTRLLIHLVDAAAARPIEDIAIIEKELFAYGHSLMNRPRVLVFNKKELLNEQCLQKLQAEARAFTNRDIIFISAATSEGLDELLKNVWEKLEI.

One can recognise an Obg domain in the interval 1-159 (MQFIDQACIS…WLLHLELKLL (159 aa)). The 169-residue stretch at 160–328 (AEVGIIGLPN…LLKNVWEKLE (169 aa)) folds into the OBG-type G domain. ATP is bound by residues 166–173 (GLPNAGKS), 191–195 (FTTLI), 213–216 (DIPG), 280–283 (NKKE), and 309–311 (SAA). Ser173 and Thr193 together coordinate Mg(2+).

This sequence belongs to the TRAFAC class OBG-HflX-like GTPase superfamily. OBG GTPase family. As to quaternary structure, monomer. The cofactor is Mg(2+).

Its subcellular location is the cytoplasm. Its function is as follows. An essential GTPase which binds GTP, GDP and possibly (p)ppGpp with moderate affinity, with high nucleotide exchange rates and a fairly low GTP hydrolysis rate. Plays a role in control of the cell cycle, stress response, ribosome biogenesis and in those bacteria that undergo differentiation, in morphogenesis control. This Prochlorococcus marinus (strain MIT 9211) protein is GTPase Obg.